The sequence spans 200 residues: Recombination protein RecR (200 aa).

The C4-type zinc-finger motif lies at 57–72 (CSQCRTFTEQETCAIC). The 96-residue stretch at 81 to 176 (GLLCVVEMPA…KVSRIAHGIP (96 aa)) folds into the Toprim domain.

This sequence belongs to the RecR family.

Its function is as follows. May play a role in DNA repair. It seems to be involved in an RecBC-independent recombinational process of DNA repair. It may act with RecF and RecO. The chain is Recombination protein RecR from Actinobacillus succinogenes (strain ATCC 55618 / DSM 22257 / CCUG 43843 / 130Z).